Here is a 162-residue protein sequence, read N- to C-terminus: SCF ubiquitin ligase complex protein SKP1b (162 aa).

At serine 2 the chain carries N-acetylserine. The segment at 100–162 is interaction with the F-box domain of F-box proteins; the sequence is ILAANYLDIK…NEWCEDKGGN (63 aa). Proline 143 is subject to 4-hydroxyproline. O-linked (GlcNAc...) hydroxyproline glycosylation is present at proline 143.

The protein belongs to the SKP1 family. Multiprotein complex (SCF) with cullin and F-box-containing protein. Capable of undergoing aggregation. Post-translationally, O-linked glycan consists of linear Gal-Gal-Fuc-Gal-GlcNAc. In terms of processing, not glycosylated in prespore cells. FpaA and fpaB seem to be identically glycosylated. Glycosylation is required for nuclear enrichment. Post-translationally, hydroxylated by phyA.

It is found in the cytoplasm. It localises to the nucleus. This Dictyostelium discoideum (Social amoeba) protein is SCF ubiquitin ligase complex protein SKP1b (fpaB-1).